The sequence spans 154 residues: Ribonuclease H (154 aa).

The RNase H type-1 domain occupies 5-147 (GKSRVAIYTD…ADMLARGEVE (143 aa)). Aspartate 14, glutamate 53, aspartate 75, and aspartate 139 together coordinate Mg(2+).

The protein belongs to the RNase H family. In terms of assembly, monomer. The cofactor is Mg(2+).

The protein localises to the cytoplasm. The catalysed reaction is Endonucleolytic cleavage to 5'-phosphomonoester.. In terms of biological role, endonuclease that specifically degrades the RNA of RNA-DNA hybrids. The polypeptide is Ribonuclease H (Anaplasma marginale (strain St. Maries)).